The primary structure comprises 297 residues: UDP-N-acetylenolpyruvoylglucosamine reductase (297 aa).

Positions 27 to 191 (TGGNADIFVM…LDATFSLELE (165 aa)) constitute an FAD-binding PCMH-type domain. The active site involves Arg-170. Ser-220 serves as the catalytic Proton donor. Glu-290 is an active-site residue.

Belongs to the MurB family. It depends on FAD as a cofactor.

It localises to the cytoplasm. It carries out the reaction UDP-N-acetyl-alpha-D-muramate + NADP(+) = UDP-N-acetyl-3-O-(1-carboxyvinyl)-alpha-D-glucosamine + NADPH + H(+). The protein operates within cell wall biogenesis; peptidoglycan biosynthesis. Functionally, cell wall formation. The sequence is that of UDP-N-acetylenolpyruvoylglucosamine reductase from Listeria welshimeri serovar 6b (strain ATCC 35897 / DSM 20650 / CCUG 15529 / CIP 8149 / NCTC 11857 / SLCC 5334 / V8).